The chain runs to 807 residues: Glycerol-3-phosphate acyltransferase (807 aa).

The HXXXXD motif motif lies at 308 to 313 (CHRSHM).

Belongs to the GPAT/DAPAT family.

Its subcellular location is the cell inner membrane. It catalyses the reaction sn-glycerol 3-phosphate + an acyl-CoA = a 1-acyl-sn-glycero-3-phosphate + CoA. The protein operates within phospholipid metabolism; CDP-diacylglycerol biosynthesis; CDP-diacylglycerol from sn-glycerol 3-phosphate: step 1/3. The protein is Glycerol-3-phosphate acyltransferase of Shewanella putrefaciens (strain CN-32 / ATCC BAA-453).